The following is a 205-amino-acid chain: Ribonuclease HII (205 aa).

In terms of domain architecture, RNase H type-2 spans 14–205 (ERICGIDEAG…SFKVRRLNEA (192 aa)). 3 residues coordinate a divalent metal cation: Asp-20, Glu-21, and Asp-117.

It belongs to the RNase HII family. Mn(2+) serves as cofactor. It depends on Mg(2+) as a cofactor.

It localises to the cytoplasm. It carries out the reaction Endonucleolytic cleavage to 5'-phosphomonoester.. Endonuclease that specifically degrades the RNA of RNA-DNA hybrids. This is Ribonuclease HII from Chlorobium phaeovibrioides (strain DSM 265 / 1930) (Prosthecochloris vibrioformis (strain DSM 265)).